A 302-amino-acid polypeptide reads, in one-letter code: Ribose-5-phosphate isomerase (302 aa).

It belongs to the ribose 5-phosphate isomerase family.

It is found in the cytoplasm. It catalyses the reaction aldehydo-D-ribose 5-phosphate = D-ribulose 5-phosphate. The protein operates within carbohydrate degradation; pentose phosphate pathway; D-ribose 5-phosphate from D-ribulose 5-phosphate (non-oxidative stage): step 1/1. The chain is Ribose-5-phosphate isomerase (RKI1) from Cryptococcus neoformans var. neoformans serotype D (strain B-3501A) (Filobasidiella neoformans).